The sequence spans 169 residues: Small ribosomal subunit protein uS5c (169 aa).

Residues 17 to 80 enclose the S5 DRBM domain; sequence WQERVVQIRR…ADGKKHVVEV (64 aa).

This sequence belongs to the universal ribosomal protein uS5 family. Part of the 30S ribosomal subunit. Contacts protein S4.

Its subcellular location is the plastid. The protein resides in the cyanelle. Functionally, with S4 and S12 plays an important role in translational accuracy. This is Small ribosomal subunit protein uS5c (rps5) from Cyanophora paradoxa.